The sequence spans 260 residues: UPF0246 protein BamMC406_2140 (260 aa).

It belongs to the UPF0246 family.

This chain is UPF0246 protein BamMC406_2140, found in Burkholderia ambifaria (strain MC40-6).